We begin with the raw amino-acid sequence, 440 residues long: FAD-dependent monooxygenase afoD (440 aa).

The helical transmembrane segment at 10 to 30 (PLSIAIIGGGIIGLMTALGLL) threads the bilayer. 3 residues coordinate FAD: glutamate 41, leucine 145, and aspartate 320. A glycan (N-linked (GlcNAc...) asparagine) is linked at asparagine 352.

This sequence belongs to the paxM FAD-dependent monooxygenase family. FAD serves as cofactor.

It is found in the membrane. FAD-dependent monooxygenase; part of the gene cluster that mediates the biosynthesis of asperfuranone, a probable antitumor agent. The polyketide synthase afoG is responsible for producing the 3,5-dimethyloctadienone moiety from acetyl-CoA, three malonyl-CoA, and two S-adenosyl methionines (SAM). The 3,5-dimethyloctadienone moiety is then loaded onto the SAT domain of afoE and extended with four malonyl-CoA and one SAM, which leads to the formation of 2,4-dihydroxy-6-(5,7-dimethyl-2-oxo-trans-3-trans-5-nonadienyl)-3-methylbenzaldehyde (compound 2) after reductive release and aldol condensation. AfoD is the next enzyme in the biosynthesis sequence and hydroxylates the side chain at the benzylic position of compound 2. After benzylic hydroxylation, a furan ring is formed after five-member ring hemiacetal formation and water elimination. AfoF and afoC are proposed to oxidize the R-diketone proton and to reduce the unconjugated carbonyl group, respectively, to generate asperfuranone. Since no intermediates could be isolated from afoF and afoC deletants, the sequence of these two enzymes is not fully understood. Moreover, since afoC deletant still produces a small amount of asperfuranone, other endogenous oxidoreductases might catalyze the same reaction with much less efficiency. This is FAD-dependent monooxygenase afoD from Emericella nidulans (strain FGSC A4 / ATCC 38163 / CBS 112.46 / NRRL 194 / M139) (Aspergillus nidulans).